The primary structure comprises 104 residues: Protein RnfH (104 aa).

The protein belongs to the UPF0125 (RnfH) family.

The chain is Protein RnfH from Pseudomonas fluorescens (strain ATCC BAA-477 / NRRL B-23932 / Pf-5).